The following is a 128-amino-acid chain: Cytochrome c-type biogenesis protein CcmE (128 aa).

Residues 1–8 (MQKRVRNR) lie on the Cytoplasmic side of the membrane. The chain crosses the membrane as a helical; Signal-anchor for type II membrane protein span at residues 9–29 (LITIIICFCSAFLGISIILYN). The Periplasmic segment spans residues 30–128 (LEKNIVFFLP…KHDENYRPPQ (99 aa)). H120 and Y124 together coordinate heme.

This sequence belongs to the CcmE/CycJ family.

It is found in the cell inner membrane. Its function is as follows. Heme chaperone required for the biogenesis of c-type cytochromes. Transiently binds heme delivered by CcmC and transfers the heme to apo-cytochromes in a process facilitated by CcmF and CcmH. This is Cytochrome c-type biogenesis protein CcmE from Rickettsia rickettsii (strain Iowa).